The sequence spans 445 residues: N-succinylarginine dihydrolase (445 aa).

Substrate contacts are provided by residues 19-28, Asn110, and 137-138; these read AGLSFGNVAS and HR. The active site involves Glu174. Arg214 is a binding site for substrate. His250 is a catalytic residue. Substrate is bound by residues Asp252 and Asn363. Cys369 serves as the catalytic Nucleophile.

Belongs to the succinylarginine dihydrolase family. In terms of assembly, homodimer.

It carries out the reaction N(2)-succinyl-L-arginine + 2 H2O + 2 H(+) = N(2)-succinyl-L-ornithine + 2 NH4(+) + CO2. It functions in the pathway amino-acid degradation; L-arginine degradation via AST pathway; L-glutamate and succinate from L-arginine: step 2/5. Catalyzes the hydrolysis of N(2)-succinylarginine into N(2)-succinylornithine, ammonia and CO(2). This is N-succinylarginine dihydrolase from Shewanella woodyi (strain ATCC 51908 / MS32).